The chain runs to 351 residues: Large ribosomal subunit protein uL3 (351 aa).

Disordered stretches follow at residues 1–31 (MGHRKLASPRRGSAGLRPRKRSSELLPTPRT) and 246–271 (KGSRKIGTRGPSLGTPSYTPQPGQLG).

This sequence belongs to the universal ribosomal protein uL3 family. In terms of assembly, part of the 50S ribosomal subunit. Forms a cluster with proteins L14 and L24e.

Its function is as follows. One of the primary rRNA binding proteins, it binds directly near the 3'-end of the 23S rRNA, where it nucleates assembly of the 50S subunit. The sequence is that of Large ribosomal subunit protein uL3 from Saccharolobus islandicus (strain Y.N.15.51 / Yellowstone #2) (Sulfolobus islandicus).